Reading from the N-terminus, the 84-residue chain is Conotoxin Am6.1 (84 aa).

An N-terminal signal peptide occupies residues 1-19 (MEKLTILLLVAAVLMSTHA). The propeptide occupies 20-47 (MFQGGGEKSRKAINFSETRKLARNKQKR). 3 disulfides stabilise this stretch: C48–C62, C55–C66, and C61–C71. W51 is modified (6'-bromotryptophan; in Am6.1b). 4-carboxyglutamate; partial; in Am6.1b and Am6.1c is present on residues E60 and E64. Positions 78-84 (RTTSHPI) are excised as a propeptide.

Belongs to the conotoxin O2 family. In terms of processing, three forms of this peptides have been described. The unmodified Am6.1a (Am3286) is not detected in the venom; Am6.1b (Am3408) is only Trp brominated, while Am6.1c (Am3452) is both Trp brominated and Glu gamma-carboxyglutamated. Both Am6.1b and Am6.1c are detected in the venom. In terms of tissue distribution, expressed by the venom duct.

It localises to the secreted. In terms of biological role, gamma-conotoxins may act on voltage-gated non-specific cation pacemaker channels (HCN). The protein is Conotoxin Am6.1 of Conus amadis (Amadis cone).